A 408-amino-acid chain; its full sequence is CinA-like protein (408 aa).

Belongs to the CinA family.

This chain is CinA-like protein, found in Fervidobacterium nodosum (strain ATCC 35602 / DSM 5306 / Rt17-B1).